Here is a 79-residue protein sequence, read N- to C-terminus: Acyl carrier protein (79 aa).

The 79-residue stretch at 1–79 (MTKEQILVDV…DVVSYIETQV (79 aa)) folds into the Carrier domain. Serine 39 carries the post-translational modification O-(pantetheine 4'-phosphoryl)serine.

Belongs to the acyl carrier protein (ACP) family. 4'-phosphopantetheine is transferred from CoA to a specific serine of apo-ACP by AcpS. This modification is essential for activity because fatty acids are bound in thioester linkage to the sulfhydryl of the prosthetic group.

Its subcellular location is the cytoplasm. Its pathway is lipid metabolism; fatty acid biosynthesis. Functionally, carrier of the growing fatty acid chain in fatty acid biosynthesis. The polypeptide is Acyl carrier protein (Exiguobacterium sibiricum (strain DSM 17290 / CCUG 55495 / CIP 109462 / JCM 13490 / 255-15)).